The chain runs to 347 residues: NADH-quinone oxidoreductase subunit H (347 aa).

Helical transmembrane passes span 21–41, 87–107, 120–140, 160–180, 194–214, 259–279, 282–302, and 324–344; these read IAGILLIALPLMLGVAMIIYA, GLFLIAPIITFTVALMAWAVI, VGLLYVLAISSLGVYGVVIAG, ISYEVSIGFILICVVLWAGTF, WIINGFVANPLLFPMWVMFLI, LLMCALNAVLFWGGYLPPLDI, LYLVPGFVWLLLKILFFFFIF, and VFLPVSLLFVFLVSGYLMATG.

This sequence belongs to the complex I subunit 1 family. In terms of assembly, NDH-1 is composed of 14 different subunits. Subunits NuoA, H, J, K, L, M, N constitute the membrane sector of the complex.

It is found in the cell inner membrane. The enzyme catalyses a quinone + NADH + 5 H(+)(in) = a quinol + NAD(+) + 4 H(+)(out). Its function is as follows. NDH-1 shuttles electrons from NADH, via FMN and iron-sulfur (Fe-S) centers, to quinones in the respiratory chain. The immediate electron acceptor for the enzyme in this species is believed to be ubiquinone. Couples the redox reaction to proton translocation (for every two electrons transferred, four hydrogen ions are translocated across the cytoplasmic membrane), and thus conserves the redox energy in a proton gradient. This subunit may bind ubiquinone. The sequence is that of NADH-quinone oxidoreductase subunit H from Novosphingobium aromaticivorans (strain ATCC 700278 / DSM 12444 / CCUG 56034 / CIP 105152 / NBRC 16084 / F199).